The following is a 37-amino-acid chain: Esculentin-2Rb (37 aa).

Cysteine 31 and cysteine 37 are disulfide-bonded.

As to expression, expressed by the skin glands.

Its subcellular location is the secreted. In terms of biological role, antimicrobial peptide. This is Esculentin-2Rb from Pelophylax ridibundus (Marsh frog).